The following is a 547-amino-acid chain: Putative cysteine ligase BshC (547 aa).

Residues 461-504 (ASTEATRSAIMDEMEALKQKVVRAEKRQQDEVRAQLKKAHTNLR) are a coiled coil.

Belongs to the BshC family.

This Salinibacter ruber (strain DSM 13855 / M31) protein is Putative cysteine ligase BshC.